Here is a 146-residue protein sequence, read N- to C-terminus: Hemoglobin subunit beta (146 aa).

Val-1 carries the post-translational modification N-acetylvaline. The region spanning 2-146 (HLTDAEKAAV…VATALAHKYH (145 aa)) is the Globin domain. Ser-44 bears the Phosphoserine mark. Lys-59 carries the post-translational modification N6-acetyllysine. His-63 contributes to the heme b binding site. At Lys-82 the chain carries N6-acetyllysine. His-92 contacts heme b. At Cys-93 the chain carries S-nitrosocysteine. At Lys-144 the chain carries N6-acetyllysine.

This sequence belongs to the globin family. As to quaternary structure, heterotetramer of two alpha chains and two beta chains. Red blood cells.

Involved in oxygen transport from the lung to the various peripheral tissues. In Spalax ehrenbergi (Middle East blind mole rat), this protein is Hemoglobin subunit beta (HBB).